The following is a 117-amino-acid chain: Ribosome-binding factor A (117 aa).

This sequence belongs to the RbfA family. In terms of assembly, monomer. Binds 30S ribosomal subunits, but not 50S ribosomal subunits or 70S ribosomes.

It is found in the cytoplasm. In terms of biological role, one of several proteins that assist in the late maturation steps of the functional core of the 30S ribosomal subunit. Associates with free 30S ribosomal subunits (but not with 30S subunits that are part of 70S ribosomes or polysomes). Required for efficient processing of 16S rRNA. May interact with the 5'-terminal helix region of 16S rRNA. The polypeptide is Ribosome-binding factor A (Syntrophobacter fumaroxidans (strain DSM 10017 / MPOB)).